A 376-amino-acid chain; its full sequence is Chaperone protein DnaJ (376 aa).

One can recognise a J domain in the interval 5-70; that stretch reads DYYEVLGVAR…NKRRAYDAHG (66 aa). The segment at 132–209 adopts a CR-type zinc-finger fold; that stretch reads GIERRIEIPT…CHGAGRVEED (78 aa). Zn(2+) contacts are provided by Cys145, Cys148, Cys161, Cys164, Cys183, Cys186, Cys197, and Cys200. CXXCXGXG motif repeat units lie at residues 145 to 152, 161 to 168, 183 to 190, and 197 to 204; these read CEPCHGSG, CATCHGRG, CPHCDGRG, and CKTCHGAG.

It belongs to the DnaJ family. In terms of assembly, homodimer. The cofactor is Zn(2+).

Its subcellular location is the cytoplasm. Functionally, participates actively in the response to hyperosmotic and heat shock by preventing the aggregation of stress-denatured proteins and by disaggregating proteins, also in an autonomous, DnaK-independent fashion. Unfolded proteins bind initially to DnaJ; upon interaction with the DnaJ-bound protein, DnaK hydrolyzes its bound ATP, resulting in the formation of a stable complex. GrpE releases ADP from DnaK; ATP binding to DnaK triggers the release of the substrate protein, thus completing the reaction cycle. Several rounds of ATP-dependent interactions between DnaJ, DnaK and GrpE are required for fully efficient folding. Also involved, together with DnaK and GrpE, in the DNA replication of plasmids through activation of initiation proteins. The protein is Chaperone protein DnaJ of Xanthomonas campestris pv. campestris (strain 8004).